A 412-amino-acid polypeptide reads, in one-letter code: MIPRIVVVLLSVLAVVTARRSYEGYKVYGIVPESPDEAEILYQIRQSNPDLDFWHLTKQPGDEARVLVAPKDQRSFLIKLIRHGLHYQEVISDVEGTLAPYNEPRTRGMSLDRDVSTSYLRHNEINEYLQTLSQKYPSLVSVEEAGTSYEGRSIKTITINKKPGNAVVFLDAGIHAREWIAPATALYAIEQLVEHSSENQEVLSNLTWVIMPVVNPDGYEFSHETDRFWRKTRKPTGKTCKGTDGNRNFDYHWGEVGASTQACADTFRGETAFSEPETRAVRDAVMKLKGSCKFYLSLHSYGNYILYPWGWTSKLPETWEAIDEVAQAGAEAIKQSTGSRYTVGSSTNVLYAAAGGSDDWAFAVAEVPISITMELPGGGNGGFNPPPSSIEKIVNESWVGIKAMALKVAQMF.

The N-terminal stretch at 1 to 18 (MIPRIVVVLLSVLAVVTA) is a signal peptide. A propeptide spans 19-75 (RRSYEGYKVYGIVPESPDEAEILYQIRQSNPDLDFWHLTKQPGDEARVLVAPKDQRS) (activation peptide). A Peptidase M14 domain is found at 118–408 (SYLRHNEINE…VGIKAMALKV (291 aa)). Zn(2+)-binding residues include His175 and Glu178. 175-178 (HARE) contributes to the a peptide binding site. A glycan (N-linked (GlcNAc...) asparagine) is linked at Asn205. A peptide-binding positions include Arg230 and 246–247 (NR). A disulfide bridge connects residues Cys240 and Cys263. His299 serves as a coordination point for Zn(2+). Residues 300-301 (SY) and Tyr351 each bind a peptide. Residue Glu374 is the Proton donor/acceptor of the active site. Asn395 carries an N-linked (GlcNAc...) asparagine glycan.

It belongs to the peptidase M14 family. Monomer. Interacts with Dengue virus type 2 (DENV2, MY89-88549 strain) envelope protein E. Interacts with Dengue virus envelope protein E type 3, type 2, type 4 and type 1 with decreasing strength. The cofactor is Zn(2+). As to expression, expressed in midgut (at protein level).

It is found in the endoplasmic reticulum. The enzyme catalyses Preferential release of a C-terminal lysine or arginine amino acid.. Inhibited by S.tuberosum metallocarboxypeptidase inhibitor. Carboxypeptidase that preferentially hydrolyzes arginine and lysine residues at the C-terminus. During infection by dengue virus, may play a role in preventing viral packaging, maturation, and release from the midgut. This is Carboxypeptidase B1 from Aedes aegypti (Yellowfever mosquito).